A 1218-amino-acid chain; its full sequence is Sodium bicarbonate cotransporter 3 (1218 aa).

Disordered stretches follow at residues 1-31 and 53-99; these read MEAD…KTSS and HVPF…SQRV. Over 1–612 the chain is Extracellular; that stretch reads MEADGAGEQM…DFKDALSLQC (612 aa). S57, S60, S89, and S155 each carry phosphoserine. A compositionally biased stretch (basic residues) spans 60 to 77; sequence SRRRHRHRGHKHHHRRRK. A compositionally biased stretch (basic and acidic residues) spans 78-90; sequence DKDSDKEDGRESP. A glycan (N-linked (GlcNAc...) asparagine) is linked at N176. 3 positions are modified to phosphoserine: S238, S247, and R263. N274 is a glycosylation site (N-linked (GlcNAc...) asparagine). 3 disordered regions span residues 294–350, 364–412, and 536–577; these read SRAG…DIPR, KGQE…ENST, and SIRI…HAGP. The span at 308–318 shows a compositional bias: pro residues; that stretch reads VPTPQNSPPSS. Low complexity predominate over residues 319 to 337; sequence PSLSRLTSRSSQQTQPQAP. The segment covering 383-396 has biased composition (polar residues); it reads SPQSAPGNLDSSKS. Phosphoserine is present on residues S386, S404, and S407. A glycan (N-linked (GlcNAc...) asparagine) is linked at N410. Residues S411 and S560 each carry the phosphoserine modification. A compositionally biased stretch (basic and acidic residues) spans 567 to 576; the sequence is PPKEADHHAG. A helical membrane pass occupies residues 613 to 633; that stretch reads LASILFLYCACMSPVITFGGL. The Cytoplasmic portion of the chain corresponds to 634-641; the sequence is LGEATEGR. Residues 642-662 form a helical membrane-spanning segment; it reads ISAIESLFGASLTGIAYSLFA. Residues 663-699 are Extracellular-facing; sequence GQPLTILGSTGPVLVFEKILFKFCRDYHLSYLSLRTS. A helical membrane pass occupies residues 700-720; that stretch reads IGLWTSFLCIVLVATDASSLV. Topologically, residues 721-729 are cytoplasmic; it reads CYITRFTEE. The chain crosses the membrane as a helical span at residues 730 to 750; it reads AFAALICIIFIYEALEKLFHL. The Extracellular portion of the chain corresponds to 751-821; it reads GEIYAFNMHN…MFVGSACGPH (71 aa). Residues C770 and C772 are joined by a disulfide bond. 3 N-linked (GlcNAc...) asparagine glycosylation sites follow: N780, N790, and N800. C806 and C818 are oxidised to a cystine. Residues 822–842 traverse the membrane as a helical segment; the sequence is GPYVPDVLFWCVVLFFTTFFL. The Cytoplasmic portion of the chain corresponds to 843–865; it reads SSFLKQFKTKRYFPTKVRSTISD. The helical transmembrane segment at 866–886 threads the bilayer; it reads FAVFLTIVIMVAIDYLVGIPS. At 887-912 the chain is on the extracellular side; that stretch reads PKLHVPEKFEPTDPSRGWIISPLGDN. Residues 913-933 traverse the membrane as a helical segment; the sequence is PWWTLLIAAVPALLCTILIFM. Residues 934-958 lie on the Cytoplasmic side of the membrane; it reads DQQITAVIINRKEHKLKKGAGYHLD. The helical transmembrane segment at 959–979 threads the bilayer; that stretch reads LLMVAVMLGVCSIMGLPWFVA. At 980 to 1015 the chain is on the extracellular side; the sequence is ATVLSISHVNSLKVESECSAPGEQPKFLGIREQRVT. The segment at 1012-1135 is essential for cell membrane localization and transport activity; that stretch reads QRVTGLMIFI…MDLCFTKREL (124 aa). The helical transmembrane segment at 1016–1036 threads the bilayer; that stretch reads GLMIFILMGLSVFMTSVLKFI. Residues 1037 to 1038 lie on the Cytoplasmic side of the membrane; the sequence is PM. Residues 1039–1059 traverse the membrane as a helical segment; that stretch reads PVLYGVFLYMGVSSLKGIQFF. The Extracellular segment spans residues 1060–1096; the sequence is DRIKLFGMPAKHQPDLIYLRYVPLWKVHVFTVVQLTC. Residues M1067 and L1078 each carry the phosphoserine modification. Residues 1097 to 1117 traverse the membrane as a helical segment; sequence LVLLWVIKASAAAVVFPMMVL. The segment at 1118–1140 is essential for interaction with RACK1; sequence ALVFVRKLMDLCFTKRELSWLDD. Residues 1118-1218 lie on the Cytoplasmic side of the membrane; it reads ALVFVRKLMD…KKYMDAETSL (101 aa). A CA2-binding region spans residues 1138-1140; sequence LDD. A compositionally biased stretch (basic and acidic residues) spans 1148-1165; the sequence is KKEDDKKKKEKEEAERML. The tract at residues 1148-1172 is disordered; it reads KKEDDKKKKEKEEAERMLQGDGDTV. The residue at position 1171 (T1171) is a Phosphothreonine. Phosphoserine occurs at positions 1180, 1188, 1201, and 1217. The short motif at 1215–1218 is the PDZ-binding element; it reads ETSL.

This sequence belongs to the anion exchanger (TC 2.A.31) family. As to quaternary structure, interacts with USH1C. Forms a complex with ATP6V1B1 and NHERF1/EBP50. Interacts in a pH dependent-manner with CA2/carbonic anhydrase 2. Interacts with CFTR probably through NHERF1/EBP50. Interacts with RACK1. In terms of processing, undergoes lysosome-mediated degradation. Post-translationally, N-glycosylated. Expressed in aorta, ventricles, atrium, mesenteric artery, kidney, spleen, duodenum, jejunum, ileum, colon, lung, trachea, gastric fundus and pylorus, cerebrum, cerebellum, pancreas, liver, parotid gland, and epididymis. Expressed in the inner ear by cochlear outer and inner hair cells (at protein level). Highly expressed in testis and spleen. In terms of tissue distribution, specifically expressed in kidney. As to expression, specifically expressed in hippocampal neurons.

It localises to the basolateral cell membrane. The protein resides in the apical cell membrane. It is found in the cell projection. Its subcellular location is the stereocilium. The protein localises to the cell membrane. The enzyme catalyses hydrogencarbonate(in) + Na(+)(in) = hydrogencarbonate(out) + Na(+)(out). With respect to regulation, insensitive to stilbene derivatives. Its function is as follows. Electroneutral sodium- and bicarbonate-dependent cotransporter with a Na(+):HCO3(-) 1:1 stoichiometry. Mediates the sodium-dependent bicarbonate transport important for pH recovery after acid load as well as for regulation of steady-state pH in the duodenum and vascular smooth muscle cells. Plays a key role in macrophage acidification, mediating bicarbonate import into the cytoplasm which is crucial for net acid extrusion and maintenance of cytoplasmic pH during phagocytosis. Provides cellular bicarbonate for de novo purine and pyrimidine synthesis and is a key mediator of de novo nucleotide synthesis downstream of mTORC1 signaling in proliferating cells. This chain is Sodium bicarbonate cotransporter 3 (Slc4a7), found in Rattus norvegicus (Rat).